Consider the following 372-residue polypeptide: Aminomethyltransferase (372 aa).

This sequence belongs to the GcvT family. In terms of assembly, the glycine cleavage system is composed of four proteins: P, T, L and H.

It carries out the reaction N(6)-[(R)-S(8)-aminomethyldihydrolipoyl]-L-lysyl-[protein] + (6S)-5,6,7,8-tetrahydrofolate = N(6)-[(R)-dihydrolipoyl]-L-lysyl-[protein] + (6R)-5,10-methylene-5,6,7,8-tetrahydrofolate + NH4(+). Functionally, the glycine cleavage system catalyzes the degradation of glycine. In Synechococcus elongatus (strain ATCC 33912 / PCC 7942 / FACHB-805) (Anacystis nidulans R2), this protein is Aminomethyltransferase.